Here is a 141-residue protein sequence, read N- to C-terminus: Hemoglobin subunit alpha-A (141 aa).

In terms of domain architecture, Globin spans 1–141; it reads VLSGSDKTNV…VGNVLTAKYR (141 aa). His-58 provides a ligand contact to O2. His-87 contributes to the heme b binding site.

This sequence belongs to the globin family. In terms of assembly, heterotetramer of two alpha chains and two beta chains. Red blood cells.

Its function is as follows. Involved in oxygen transport from the lung to the various peripheral tissues. The chain is Hemoglobin subunit alpha-A (HBAA) from Vultur gryphus (Andean condor).